The chain runs to 434 residues: Ribosomal protein uS12 methylthiotransferase RimO (434 aa).

The region spanning 2–112 is the MTTase N-terminal domain; sequence AKIGFVSLGC…VLEAVQEVLP (111 aa). [4Fe-4S] cluster is bound by residues Cys11, Cys47, Cys76, Cys142, Cys146, and Cys149. The Radical SAM core domain occupies 128-365; it reads LTPRHYAYVK…LEVQARVSLR (238 aa). The 67-residue stretch at 368 to 434 folds into the TRAM domain; sequence QRFVGKTLEV…DTYDLHGVQA (67 aa).

This sequence belongs to the methylthiotransferase family. RimO subfamily. The cofactor is [4Fe-4S] cluster.

Its subcellular location is the cytoplasm. The enzyme catalyses L-aspartate(89)-[ribosomal protein uS12]-hydrogen + (sulfur carrier)-SH + AH2 + 2 S-adenosyl-L-methionine = 3-methylsulfanyl-L-aspartate(89)-[ribosomal protein uS12]-hydrogen + (sulfur carrier)-H + 5'-deoxyadenosine + L-methionine + A + S-adenosyl-L-homocysteine + 2 H(+). Functionally, catalyzes the methylthiolation of an aspartic acid residue of ribosomal protein uS12. This Thermus thermophilus (strain ATCC BAA-163 / DSM 7039 / HB27) protein is Ribosomal protein uS12 methylthiotransferase RimO.